The chain runs to 305 residues: DNA-directed RNA polymerase 35 kDa subunit (305 aa).

The protein belongs to the poxviridae DNA-directed RNA polymerase 35 kDa subunit family. The DNA-dependent RNA polymerase used for intermediate and late genes expression consists of eight subunits 147 kDa, 133 kDa, 35 kDa, 30 kDa, 22 kDa, 19 kDa, 18 kDa and 7 kDa totalling more than 500 kDa in mass. The same holoenzyme, with the addition of the transcription-specificity factor RAP94, is used for early gene expression.

Its subcellular location is the virion. The catalysed reaction is RNA(n) + a ribonucleoside 5'-triphosphate = RNA(n+1) + diphosphate. Its function is as follows. Part of the DNA-dependent RNA polymerase which catalyzes the transcription of viral DNA into RNA using the four ribonucleoside triphosphates as substrates. Responsible for the transcription of early, intermediate and late genes. DNA-dependent RNA polymerase associates with the early transcription factor (ETF), itself composed of D6 and A7, thereby allowing the early genes transcription. Late transcription, and probably also intermediate transcription, require newly synthesized RNA polymerase. The chain is DNA-directed RNA polymerase 35 kDa subunit (OPG156) from Variola virus (isolate Human/India/Ind3/1967) (VARV).